The primary structure comprises 315 residues: MTEAWRPEDDEPRGASGPVRVRVPAKINLHLGVGPLRRDGYHELNTVYHAISIHDELTARRGDTLTLTMEGEGAGELALDESNLVIRAARALAGSTGVPPHARLHLRKQIPLAGGLAGGSADAAAALVACDALWGTGLTRDELAEIAAGLGSDVPFLIHGGTALGTGRGEAVSPVLARPTVWHWVVAVADGGLSTPVAYRELDRLRAAGAAGPPLGSTDTLLAALRQPDPRVLAAALGNDLQDAALALRPALAATLKAGEAAGALAGIVSGSGPTCVFLAAGAADAERIAAELSALDVCRQARTAHGPVAGARIG.

Residue K26 is part of the active site. 111-121 (PLAGGLAGGSA) is an ATP binding site. The active site involves D153.

Belongs to the GHMP kinase family. IspE subfamily.

The enzyme catalyses 4-CDP-2-C-methyl-D-erythritol + ATP = 4-CDP-2-C-methyl-D-erythritol 2-phosphate + ADP + H(+). It participates in isoprenoid biosynthesis; isopentenyl diphosphate biosynthesis via DXP pathway; isopentenyl diphosphate from 1-deoxy-D-xylulose 5-phosphate: step 3/6. Its function is as follows. Catalyzes the phosphorylation of the position 2 hydroxy group of 4-diphosphocytidyl-2C-methyl-D-erythritol. This chain is 4-diphosphocytidyl-2-C-methyl-D-erythritol kinase, found in Salinispora tropica (strain ATCC BAA-916 / DSM 44818 / JCM 13857 / NBRC 105044 / CNB-440).